Consider the following 368-residue polypeptide: Hydrophobic dipeptide epimerase (368 aa).

Substrate-binding positions include Thr-143 and 168 to 170; that span reads KIK. Mg(2+)-binding residues include Asp-197, Glu-225, and Asp-253. Substrate contacts are provided by residues Lys-277 and 329 to 331; that span reads DMD.

The protein belongs to the mandelate racemase/muconate lactonizing enzyme family. It depends on Mg(2+) as a cofactor.

Functionally, catalyzes the epimerization of various hydrophobic dipeptides, such as L-Ala-L-Phe. Has epimerase activity with L-Ala-L-Thr, L-Ala-L-Met, L-Ala-L-Tyr, as well as L-Phe-L-Met, L-Phe-L-Ser and L-Phe-L-Thr (in vitro). The protein is Hydrophobic dipeptide epimerase of Citrifermentans bemidjiense (strain ATCC BAA-1014 / DSM 16622 / JCM 12645 / Bem) (Geobacter bemidjiensis).